The sequence spans 1084 residues: Teashirt homolog 1 (1084 aa).

3 disordered regions span residues 49-108 (EETE…SVSY), 140-167 (NSAT…TAST), and 269-298 (GHYR…MEME). Polar residues-rich tracts occupy residues 57–71 (QSYQ…TNQD) and 140–152 (NSAT…SQKE). 2 C2H2-type zinc fingers span residues 246-270 (FRCK…ETGH) and 307-331 (LKCM…KTKH). Residues 269–284 (GHYRDDNRDKDSEKTK) are compositionally biased toward basic and acidic residues. The C2H2-type 3; atypical zinc-finger motif lies at 416-440 (LKCMECGSSHDTLQQLTAHMMVTGH). Disordered regions lie at residues 467–534 (SIPL…EKFE) and 653–728 (TGKV…LKAK). 3 stretches are compositionally biased toward basic and acidic residues: residues 496–534 (SEEK…EKFE), 653–671 (TGKV…EKSS), and 681–714 (KENK…ESTL). S771 carries the phosphoserine modification. The disordered stretch occupies residues 855–879 (GRLTPKSSTPSTVSEKSDADGSSFE). Residues 859–868 (PKSSTPSTVS) are compositionally biased toward polar residues. Residues 891-961 (RKGRQSNWNP…NVKYQLRRTG (71 aa)) constitute a DNA-binding region (homeobox; atypical). 2 C2H2-type zinc fingers span residues 976–998 (FFCN…LETH) and 1044–1067 (FQCK…SKTH).

Belongs to the teashirt C2H2-type zinc-finger protein family. As to quaternary structure, interacts (via homeobox domain) with APBB1 (via PID domain 1).

It is found in the nucleus. In terms of biological role, probable transcriptional regulator involved in developmental processes. May act as a transcriptional repressor (Potential). This chain is Teashirt homolog 1 (Tshz1), found in Mus musculus (Mouse).